The sequence spans 198 residues: Phosphoheptose isomerase (198 aa).

Residues 36-198 (MIGSLLNNGK…DCLLLGVEDQ (163 aa)) form the SIS domain. 51-53 (NGG) is a binding site for substrate. 2 residues coordinate Zn(2+): histidine 60 and glutamate 64. Substrate contacts are provided by residues glutamate 64, 93–94 (ND), 119–121 (STS), serine 124, and glutamine 174. Zn(2+) contacts are provided by glutamine 174 and histidine 182.

The protein belongs to the SIS family. GmhA subfamily. Homotetramer. Zn(2+) serves as cofactor.

It localises to the cytoplasm. The catalysed reaction is 2 D-sedoheptulose 7-phosphate = D-glycero-alpha-D-manno-heptose 7-phosphate + D-glycero-beta-D-manno-heptose 7-phosphate. The protein operates within carbohydrate biosynthesis; D-glycero-D-manno-heptose 7-phosphate biosynthesis; D-glycero-alpha-D-manno-heptose 7-phosphate and D-glycero-beta-D-manno-heptose 7-phosphate from sedoheptulose 7-phosphate: step 1/1. Its function is as follows. Catalyzes the isomerization of sedoheptulose 7-phosphate in D-glycero-D-manno-heptose 7-phosphate. This is Phosphoheptose isomerase from Aromatoleum aromaticum (strain DSM 19018 / LMG 30748 / EbN1) (Azoarcus sp. (strain EbN1)).